A 189-amino-acid polypeptide reads, in one-letter code: GTP cyclohydrolase 1 (189 aa).

Residues Cys-79, His-82, and Cys-150 each coordinate Zn(2+).

It belongs to the GTP cyclohydrolase I family. Homomer.

The catalysed reaction is GTP + H2O = 7,8-dihydroneopterin 3'-triphosphate + formate + H(+). Its pathway is cofactor biosynthesis; 7,8-dihydroneopterin triphosphate biosynthesis; 7,8-dihydroneopterin triphosphate from GTP: step 1/1. The sequence is that of GTP cyclohydrolase 1 from Rickettsia peacockii (strain Rustic).